The primary structure comprises 739 residues: Phosphoribosylformylglycinamidine synthase subunit PurL (739 aa).

The active site involves H54. Y57 and K96 together coordinate ATP. E98 provides a ligand contact to Mg(2+). Residues 99–102 (SHNH) and R121 each bind substrate. Residue H100 is the Proton acceptor of the active site. D122 contacts Mg(2+). Substrate is bound at residue Q245. Mg(2+) is bound at residue D275. Substrate is bound at residue 319–321 (ESQ). D504 and G541 together coordinate ATP. Residue N542 coordinates Mg(2+). S544 lines the substrate pocket.

It belongs to the FGAMS family. In terms of assembly, monomer. Part of the FGAM synthase complex composed of 1 PurL, 1 PurQ and 2 PurS subunits.

The protein resides in the cytoplasm. It carries out the reaction N(2)-formyl-N(1)-(5-phospho-beta-D-ribosyl)glycinamide + L-glutamine + ATP + H2O = 2-formamido-N(1)-(5-O-phospho-beta-D-ribosyl)acetamidine + L-glutamate + ADP + phosphate + H(+). It participates in purine metabolism; IMP biosynthesis via de novo pathway; 5-amino-1-(5-phospho-D-ribosyl)imidazole from N(2)-formyl-N(1)-(5-phospho-D-ribosyl)glycinamide: step 1/2. In terms of biological role, part of the phosphoribosylformylglycinamidine synthase complex involved in the purines biosynthetic pathway. Catalyzes the ATP-dependent conversion of formylglycinamide ribonucleotide (FGAR) and glutamine to yield formylglycinamidine ribonucleotide (FGAM) and glutamate. The FGAM synthase complex is composed of three subunits. PurQ produces an ammonia molecule by converting glutamine to glutamate. PurL transfers the ammonia molecule to FGAR to form FGAM in an ATP-dependent manner. PurS interacts with PurQ and PurL and is thought to assist in the transfer of the ammonia molecule from PurQ to PurL. In Lactococcus lactis subsp. lactis (strain IL1403) (Streptococcus lactis), this protein is Phosphoribosylformylglycinamidine synthase subunit PurL.